Here is a 293-residue protein sequence, read N- to C-terminus: D-alanine--D-alanine ligase (293 aa).

Positions 98–291 (KIIWEQHSLT…FNKLVTSIIN (194 aa)) constitute an ATP-grasp domain. ATP is bound at residue 124–177 (NFPLPWAVKPTLEGSSIGISKVDNQMQLNDALMLAWQYAPYALIEQWIKGDEYT). Residues D245, E258, and N260 each contribute to the Mg(2+) site.

It belongs to the D-alanine--D-alanine ligase family. Requires Mg(2+) as cofactor. Mn(2+) is required as a cofactor.

The protein resides in the cytoplasm. The enzyme catalyses 2 D-alanine + ATP = D-alanyl-D-alanine + ADP + phosphate + H(+). It functions in the pathway cell wall biogenesis; peptidoglycan biosynthesis. Its function is as follows. Cell wall formation. The polypeptide is D-alanine--D-alanine ligase (Vesicomyosocius okutanii subsp. Calyptogena okutanii (strain HA)).